A 71-amino-acid chain; its full sequence is Protein DP71L (71 aa).

2 important for host CHOP inhibition regions span residues 16–18 (VRF) and 57–61 (LSTVL).

Belongs to the asfivirus DP71L family. As to quaternary structure, interacts (via C-terminus) with host PPP1CB.

Interacts with the host phosphatase PP1 catalytic subunit (PPP1CB) and recruits it to dephosphorylate EIF2S1/eIF2alpha and therefore restores the host translation that has been shut-down by the host. Also inhibits the EIF2S1/eIF2alpha-ATF4-DDIT3/CHOP pathway. This African swine fever virus (strain Badajoz 1971 Vero-adapted) (Ba71V) protein is Protein DP71L.